We begin with the raw amino-acid sequence, 508 residues long: Photosystem II CP47 reaction center protein (508 aa).

Transmembrane regions (helical) follow at residues 21-36 (AVHI…WAGS), 101-115 (IVFS…IWHW), 140-156 (GIHL…FGAF), 203-218 (IAAG…FHLS), 237-252 (VLSS…AFVV), and 457-472 (SFAL…HGAR).

Belongs to the PsbB/PsbC family. PsbB subfamily. PSII is composed of 1 copy each of membrane proteins PsbA, PsbB, PsbC, PsbD, PsbE, PsbF, PsbH, PsbI, PsbJ, PsbK, PsbL, PsbM, PsbT, PsbX, PsbY, PsbZ, Psb30/Ycf12, at least 3 peripheral proteins of the oxygen-evolving complex and a large number of cofactors. It forms dimeric complexes. The cofactor is Binds multiple chlorophylls. PSII binds additional chlorophylls, carotenoids and specific lipids..

It localises to the plastid. The protein localises to the chloroplast thylakoid membrane. Its function is as follows. One of the components of the core complex of photosystem II (PSII). It binds chlorophyll and helps catalyze the primary light-induced photochemical processes of PSII. PSII is a light-driven water:plastoquinone oxidoreductase, using light energy to abstract electrons from H(2)O, generating O(2) and a proton gradient subsequently used for ATP formation. This chain is Photosystem II CP47 reaction center protein, found in Ranunculus macranthus (Large buttercup).